The sequence spans 245 residues: Octanoyltransferase (245 aa).

The region spanning 54-242 is the BPL/LPL catalytic domain; it reads QNAHEQVWLL…SFEQIFGPII (189 aa). Substrate contacts are provided by residues 93–100, 173–175, and 186–188; these read RGGEFTYH, AIG, and GVS. The active-site Acyl-thioester intermediate is the cysteine 204.

Belongs to the LipB family.

It is found in the cytoplasm. The catalysed reaction is octanoyl-[ACP] + L-lysyl-[protein] = N(6)-octanoyl-L-lysyl-[protein] + holo-[ACP] + H(+). The protein operates within protein modification; protein lipoylation via endogenous pathway; protein N(6)-(lipoyl)lysine from octanoyl-[acyl-carrier-protein]: step 1/2. Functionally, catalyzes the transfer of endogenously produced octanoic acid from octanoyl-acyl-carrier-protein onto the lipoyl domains of lipoate-dependent enzymes. Lipoyl-ACP can also act as a substrate although octanoyl-ACP is likely to be the physiological substrate. This is Octanoyltransferase from Bartonella henselae (strain ATCC 49882 / DSM 28221 / CCUG 30454 / Houston 1) (Rochalimaea henselae).